Consider the following 161-residue polypeptide: Nucleotide-binding protein H16_A3060 (161 aa).

It belongs to the YajQ family.

In terms of biological role, nucleotide-binding protein. This Cupriavidus necator (strain ATCC 17699 / DSM 428 / KCTC 22496 / NCIMB 10442 / H16 / Stanier 337) (Ralstonia eutropha) protein is Nucleotide-binding protein H16_A3060.